A 262-amino-acid chain; its full sequence is Tropinone reductase homolog At2g29310 (262 aa).

13–37 (LVTGAASGIGYAIVEELASFGAIIH) is an NADP(+) binding site. Residue S146 participates in substrate binding. Y159 serves as the catalytic Proton acceptor.

The protein belongs to the short-chain dehydrogenases/reductases (SDR) family. SDR65C subfamily.

This is Tropinone reductase homolog At2g29310 from Arabidopsis thaliana (Mouse-ear cress).